A 270-amino-acid chain; its full sequence is 3-phenylpropionate-dihydrodiol/cinnamic acid-dihydrodiol dehydrogenase (270 aa).

10 to 34 (FITGGGSGLGLALVERFIEEGAQVA) provides a ligand contact to NAD(+). Position 143 (serine 143) interacts with substrate. Tyrosine 156 serves as the catalytic Proton acceptor.

It belongs to the short-chain dehydrogenases/reductases (SDR) family.

The catalysed reaction is 3-(cis-5,6-dihydroxycyclohexa-1,3-dien-1-yl)propanoate + NAD(+) = 3-(2,3-dihydroxyphenyl)propanoate + NADH + H(+). It carries out the reaction (2E)-3-(cis-5,6-dihydroxycyclohexa-1,3-dien-1-yl)prop-2-enoate + NAD(+) = (2E)-3-(2,3-dihydroxyphenyl)prop-2-enoate + NADH + H(+). It participates in aromatic compound metabolism; 3-phenylpropanoate degradation. Functionally, converts 3-phenylpropionate-dihydrodiol (PP-dihydrodiol) and cinnamic acid-dihydrodiol (CI-dihydrodiol) into 3-(2,3-dihydroxylphenyl)propanoic acid (DHPP) and 2,3-dihydroxicinnamic acid (DHCI), respectively. The polypeptide is 3-phenylpropionate-dihydrodiol/cinnamic acid-dihydrodiol dehydrogenase (Escherichia coli O17:K52:H18 (strain UMN026 / ExPEC)).